We begin with the raw amino-acid sequence, 440 residues long: Sorting nexin-31 (440 aa).

The 109-residue stretch at 1–109 (MKMHFCIPVS…EFLKLAQLNT (109 aa)) folds into the PX domain.

Belongs to the sorting nexin family. Interacts with CCDC22, CCDC93, VPS26C and VPS35L, associates with the retriever and CCC complexes.

Functionally, may be involved in protein trafficking. The sequence is that of Sorting nexin-31 (SNX31) from Homo sapiens (Human).